A 192-amino-acid chain; its full sequence is Group XIIA secretory phospholipase A2 (192 aa).

A signal peptide spans 1-25; that stretch reads MVTPRPAPARSPALLLLLLLATARG. 3 residues coordinate Ca(2+): glycine 91, proline 93, and phenylalanine 95. Residue histidine 113 is part of the active site. Aspartate 114 contacts Ca(2+). Aspartate 128 is an active-site residue.

Belongs to the phospholipase A2 family. Ca(2+) is required as a cofactor.

It localises to the secreted. The protein resides in the cytoplasm. It carries out the reaction a 1,2-diacyl-sn-glycero-3-phosphocholine + H2O = a 1-acyl-sn-glycero-3-phosphocholine + a fatty acid + H(+). Functionally, PA2 catalyzes the calcium-dependent hydrolysis of the 2-acyl groups in 3-sn-phosphoglycerides. Does not exhibit detectable activity toward sn-2-arachidonoyl- or linoleoyl-phosphatidylcholine or -phosphatidylethanolamine. The chain is Group XIIA secretory phospholipase A2 (Pla2g12a) from Mus musculus (Mouse).